Here is a 426-residue protein sequence, read N- to C-terminus: Histidine--tRNA ligase (426 aa).

It belongs to the class-II aminoacyl-tRNA synthetase family. As to quaternary structure, homodimer.

Its subcellular location is the cytoplasm. It catalyses the reaction tRNA(His) + L-histidine + ATP = L-histidyl-tRNA(His) + AMP + diphosphate + H(+). The polypeptide is Histidine--tRNA ligase (Chlorobium phaeovibrioides (strain DSM 265 / 1930) (Prosthecochloris vibrioformis (strain DSM 265))).